The following is a 504-amino-acid chain: Pentatricopeptide repeat-containing protein At5g16640, mitochondrial (504 aa).

A mitochondrion-targeting transit peptide spans 1-43 (MRRSISSKAKSFLHRNLLYSGNSGTSPSSSFSICGFCFSRRAY). PPR repeat units follow at residues 45 to 79 (NGSD…RPLP), 80 to 114 (SIAD…GIPH), 115 to 149 (NLCT…GHEP), 150 to 184 (SIVT…GYKP), 185 to 219 (NVVI…GIGP), 220 to 254 (DVVT…EIYP), 255 to 289 (DVFT…SLDP), 290 to 324 (DIVT…GCFP), 325 to 359 (DVVT…GVVR), 360 to 394 (NTVT…GVHP), 395 to 429 (NIIT…GMDA), 430 to 464 (DIVT…GLMP), and 465 to 499 (DIWT…GILP).

It belongs to the PPR family. P subfamily.

It is found in the mitochondrion. The chain is Pentatricopeptide repeat-containing protein At5g16640, mitochondrial from Arabidopsis thaliana (Mouse-ear cress).